We begin with the raw amino-acid sequence, 134 residues long: Cytochrome b5 (134 aa).

The residue at position 2 (alanine 2) is an N-acetylalanine. An N6-acetyllysine mark is found at lysine 7, lysine 10, and lysine 19. One can recognise a Cytochrome b5 heme-binding domain in the interval 9–85 (VKYYTLEEIK…SKTFIIGELH (77 aa)). Residues histidine 44 and histidine 68 each contribute to the heme site. Residues 109–131 (WWTNWVIPAISALIVALMYRLYM) form a helical membrane-spanning segment.

The protein belongs to the cytochrome b5 family.

Its subcellular location is the endoplasmic reticulum membrane. It localises to the microsome membrane. Cytochrome b5 is a membrane-bound hemoprotein functioning as an electron carrier for several membrane-bound oxygenases. The polypeptide is Cytochrome b5 (CYB5A) (Oryctolagus cuniculus (Rabbit)).